The chain runs to 573 residues: Solute carrier family 41 member 2 (573 aa).

At 1–162 (MTNSKGRSIT…KESSGIMALQ (162 aa)) the chain is on the extracellular side. Serine 136 and serine 137 each carry phosphoserine. The helical transmembrane segment at 163–183 (ILVPFLLAGFGTVSAGMVLDI) threads the bilayer. At 184–195 (VQHWEVFRKVTE) the chain is on the cytoplasmic side. A helical membrane pass occupies residues 196-216 (VFILVPALLGLKGNLEMTLAS). The Extracellular portion of the chain corresponds to 217–245 (RLSTAVNIGKMDSPIEKWNLIIGNLALKQ). Residues 246–266 (VQATVVGFLAAVAAIILGWIP) form a helical membrane-spanning segment. At 267–282 (EGKYYLDHSILLCSSS) the chain is on the cytoplasmic side. Residues 283–303 (VATAFIASLLQGIIMVGVIVG) traverse the membrane as a helical segment. Over 304 to 313 (SKKTGINPDN) the chain is Extracellular. A helical membrane pass occupies residues 314–334 (VATPIAASFGDLITLAILAWI). At 335–347 (SQGLYSCLETYYY) the chain is on the cytoplasmic side. The helical transmembrane segment at 348–368 (ISPLVGVFFLALTPIWIIIAA) threads the bilayer. Topologically, residues 369 to 376 (KHPATRTV) are extracellular. Residues 377-397 (LHSGWEPVITAMVISSIGGLI) form a helical membrane-spanning segment. Topologically, residues 398-406 (LDTTVSDPN) are cytoplasmic. The chain crosses the membrane as a helical span at residues 407–427 (LVGIVVYTPVINGIGGNLVAI). Topologically, residues 428-469 (QASRISTYLHLHSIPGELPDEPKGCYYPFRTFFGPGVNNKSA) are extracellular. A helical transmembrane segment spans residues 470 to 490 (QVLLLLVIPGHLIFLYTIHLM). The Cytoplasmic segment spans residues 491–498 (KSGHTSLT). Residues 499–519 (IIFIVVYLFAAVLQVFTLLWI) form a helical membrane-spanning segment. The Extracellular segment spans residues 520-543 (ADWMVHHFWRKGKDPDSFSIPYLT). The helical transmembrane segment at 544-564 (ALGDLLGTALLALSFHFLWLI) threads the bilayer. Residues 565 to 573 (GDRDGDVGD) lie on the Cytoplasmic side of the membrane.

The protein belongs to the SLC41A transporter family.

Its subcellular location is the cell membrane. The catalysed reaction is Mg(2+)(in) = Mg(2+)(out). It carries out the reaction Mn(2+)(in) = Mn(2+)(out). The enzyme catalyses Co(2+)(in) = Co(2+)(out). It catalyses the reaction Ni(2+)(in) = Ni(2+)(out). The catalysed reaction is Fe(2+)(in) = Fe(2+)(out). Its function is as follows. Acts as a plasma-membrane magnesium transporter. Can also mediate the transport of other divalent metal cations in an order of Ba(2+) &gt; Ni(2+) &gt; Co(2+) &gt; Fe(2+) &gt; Mn(2+). This Macaca fascicularis (Crab-eating macaque) protein is Solute carrier family 41 member 2 (SLC41A2).